The sequence spans 325 residues: Natural cytotoxicity triggering receptor 1 (325 aa).

A signal peptide spans 1–16 (MLPTLTALLCLGLCLS). Over 17-255 (QRINTEKETL…SAFWDHTTQN (239 aa)) the chain is Extracellular. Ig-like domains lie at 34–118 (KPSI…LVVT) and 129–211 (YPRP…LLIT). Cysteines 49 and 98 form a disulfide. Asn-139 carries an N-linked (GlcNAc...) asparagine glycan. A disulfide bond links Cys-144 and Cys-190. N-linked (GlcNAc...) asparagine glycans are attached at residues Asn-216 and Asn-238. A helical membrane pass occupies residues 256-273 (LIRIGLACIILITLVWLL). Residues 274-325 (TEDWLSKRKDHEEANRLTNWECRRRWRMQHYFEEEQRNAISMMELKATPGAL) lie on the Cytoplasmic side of the membrane.

This sequence belongs to the natural cytotoxicity receptor (NCR) family. As to quaternary structure, interacts with CD3Z and FCER1G. In terms of tissue distribution, selectively expressed by NK cells.

The protein resides in the cell membrane. Its function is as follows. Cytotoxicity-activating receptor that may contribute to the increased efficiency of activated natural killer (NK) cells to mediate tumor cell lysis. In Mus musculus (Mouse), this protein is Natural cytotoxicity triggering receptor 1 (Ncr1).